The sequence spans 902 residues: Protein translocase subunit SecA (902 aa).

ATP-binding positions include Gln-87, 105 to 109 (GEGKT), and Asp-512. Residues 836–902 (DVEKVEEQHR…KFKQCCGKLK (67 aa)) form a disordered region. The segment covering 840–863 (VEEQHRKSENAPREYQHEEVEHVG) has biased composition (basic and acidic residues). Residues Cys-886, Cys-888, Cys-897, and Cys-898 each coordinate Zn(2+).

Belongs to the SecA family. Monomer and homodimer. Part of the essential Sec protein translocation apparatus which comprises SecA, SecYEG and auxiliary proteins SecDF-YajC and YidC. Requires Zn(2+) as cofactor.

It localises to the cell inner membrane. The protein localises to the cytoplasm. It carries out the reaction ATP + H2O + cellular proteinSide 1 = ADP + phosphate + cellular proteinSide 2.. Its function is as follows. Part of the Sec protein translocase complex. Interacts with the SecYEG preprotein conducting channel. Has a central role in coupling the hydrolysis of ATP to the transfer of proteins into and across the cell membrane, serving both as a receptor for the preprotein-SecB complex and as an ATP-driven molecular motor driving the stepwise translocation of polypeptide chains across the membrane. This Pseudoalteromonas translucida (strain TAC 125) protein is Protein translocase subunit SecA.